The following is a 93-amino-acid chain: Cobalt transport protein CbiN (93 aa).

2 helical membrane passes run 5-25 (LMLL…NHGG) and 63-83 (LLFT…LGYC).

Belongs to the CbiN family. Forms an energy-coupling factor (ECF) transporter complex composed of an ATP-binding protein (A component, CbiO), a transmembrane protein (T component, CbiQ) and 2 possible substrate-capture proteins (S components, CbiM and CbiN) of unknown stoichimetry.

The protein localises to the cell inner membrane. It functions in the pathway cofactor biosynthesis; adenosylcobalamin biosynthesis. Its function is as follows. Part of the energy-coupling factor (ECF) transporter complex CbiMNOQ involved in cobalt import. This is Cobalt transport protein CbiN from Salmonella agona (strain SL483).